Reading from the N-terminus, the 358-residue chain is 3-dehydroquinate synthase (358 aa).

NAD(+) is bound by residues 102–106 (GVVGD), 126–127 (TT), lysine 138, and lysine 147. Residues glutamate 180, histidine 243, and histidine 260 each contribute to the Zn(2+) site.

The protein belongs to the sugar phosphate cyclases superfamily. Dehydroquinate synthase family. The cofactor is Co(2+). Requires Zn(2+) as cofactor. NAD(+) serves as cofactor.

It localises to the cytoplasm. It carries out the reaction 7-phospho-2-dehydro-3-deoxy-D-arabino-heptonate = 3-dehydroquinate + phosphate. It participates in metabolic intermediate biosynthesis; chorismate biosynthesis; chorismate from D-erythrose 4-phosphate and phosphoenolpyruvate: step 2/7. Catalyzes the conversion of 3-deoxy-D-arabino-heptulosonate 7-phosphate (DAHP) to dehydroquinate (DHQ). The protein is 3-dehydroquinate synthase of Shouchella clausii (strain KSM-K16) (Alkalihalobacillus clausii).